Consider the following 440-residue polypeptide: Serine/threonine-protein kinase 2 (440 aa).

The Protein kinase domain occupies 85 to 440 (NDDFYHISTG…FSNWINGESC (356 aa)). Residues 91-99 (ISTGGYGIV) and Lys-115 each bind ATP. Catalysis depends on Asp-306, which acts as the Proton acceptor.

The protein belongs to the protein kinase superfamily. Ser/Thr protein kinase family. Poxviruses subfamily. Post-translationally, phosphorylated in vivo. Autophosphorylated in vitro.

It localises to the host endoplasmic reticulum. It is found in the host endoplasmic reticulum-Golgi intermediate compartment. The enzyme catalyses L-seryl-[protein] + ATP = O-phospho-L-seryl-[protein] + ADP + H(+). It catalyses the reaction L-threonyl-[protein] + ATP = O-phospho-L-threonyl-[protein] + ADP + H(+). Essential serine-protein kinase involved in the early stage of virion morphogenesis. The sequence is that of Serine/threonine-protein kinase 2 (OPG054) from Sus scrofa (Pig).